Consider the following 127-residue polypeptide: Small ribosomal subunit protein bS16 (127 aa).

The interval glycine 80 to valine 127 is disordered. Residues leucine 81 to proline 90 show a composition bias toward basic residues. The span at histidine 91–glutamate 101 shows a compositional bias: basic and acidic residues. A compositionally biased stretch (low complexity) spans arginine 102–alanine 121.

It belongs to the bacterial ribosomal protein bS16 family.

In Bartonella henselae (strain ATCC 49882 / DSM 28221 / CCUG 30454 / Houston 1) (Rochalimaea henselae), this protein is Small ribosomal subunit protein bS16.